Consider the following 245-residue polypeptide: MKHTQSGQSTSPLVIDYTCRVCQMAFVFSSLIPLLLMTPVFCLGNTSECFQNFSQSHKCILMHSPPSAMAELPPSANTSVCSTLYFYGIAIFLGSFVLSLLTIMVLLIRAQTLYKKFVKSTGFLGSEQWAVIHIVDQRVRFYPVAFFCCWGPAVILMIIKLTKPQDTKLHMALYVLQALTATSQGLLNCGVYGWTQHKFHQLKQEARRDADTQTPLLCSQKRFYSRGLNSLESTLTFPASTSTIF.

4 consecutive transmembrane segments (helical) span residues 24–44, 88–108, 141–161, and 173–195; these read MAFVFSSLIPLLLMTPVFCLG, GIAIFLGSFVLSLLTIMVLLI, FYPVAFFCCWGPAVILMIIKL, and LYVLQALTATSQGLLNCGVYGWT.

The protein localises to the membrane. The polypeptide is Transmembrane protein 116 (TMEM116) (Homo sapiens (Human)).